The following is a 2541-amino-acid chain: Talin-1 (2541 aa).

The region spanning 86-403 (RPLKIRMLDG…GYIDIILKKK (318 aa)) is the FERM domain. Threonine 167 bears the Phosphothreonine mark. The segment at 280 to 435 (FQAHKNCGQM…PKKSTVLQQQ (156 aa)) is interaction with LAYN. Residues serine 405, serine 425, serine 446, serine 620, and serine 729 each carry the phosphoserine modification. A helical bundle R1 region spans residues 482-655 (RGHMPPLTSA…QASGELLQQI (174 aa)). The tract at residues 656 to 786 (GESDTDPHFQ…ALNELLQHVK (131 aa)) is helical bundle R2. Residues 787-911 (AHATGAGPAG…NAAAQNAIKK (125 aa)) form a helical bundle R3 region. Residues 913-1044 (LVQRLEHAAK…RTAAQKAQEA (132 aa)) form a helical bundle R4 region. A Phosphoserine modification is found at serine 1021. The interval 1046–1206 (GPLEMDSALS…NRCVSCLPGQ (161 aa)) is helical bundle R5. Tyrosine 1116 bears the Phosphotyrosine mark. A Phosphothreonine modification is found at threonine 1142. Phosphoserine is present on residues serine 1201 and serine 1225. Positions 1207-1357 (RDVDNALRAV…QLITMCTQQA (151 aa)) are helical bundle R6. At threonine 1263 the chain carries Phosphothreonine. At serine 1323 the chain carries Phosphoserine. The segment at 1327–1948 (AAPNLKSQLA…CSPSDAYTKK (622 aa)) is interaction with SYNM. Positions 1358–1453 (PGQKECDNAL…AYLVGVSDPN (96 aa)) are helical bundle R7A. The interval 1359 to 1659 (GQKECDNALR…SMRDKAPGQL (301 aa)) is interaction with VCL and F-actin. The helical bundle R8 stretch occupies residues 1461–1580 (LVEPTQFARA…NLSAFASNPE (120 aa)). Position 1544 is an N6-acetyllysine (lysine 1544). Positions 1581 to 1653 (FSSIPAQISP…IKKLITSMRD (73 aa)) are helical bundle R7B. Residues 1655–1822 (APGQLECETA…TLNEAASAAG (168 aa)) are helical bundle R9. Residues 1823–1973 (VVGGMVDSIT…VLAALQAGNR (151 aa)) are helical bundle R10. Serine 1849 carries the phosphoserine modification. At threonine 1855 the chain carries Phosphothreonine. Serine 1878 bears the Phosphoserine mark. Residues 1974 to 2140 (GTQACITAAS…TVKAVEDEAT (167 aa)) are helical bundle R11. Lysine 2031 carries the post-translational modification N6-acetyllysine. Position 2040 is a phosphoserine (serine 2040). At lysine 2115 the chain carries N6-acetyllysine. The helical bundle R12 stretch occupies residues 2141–2294 (KGTRALEATT…QAAEAMKGTE (154 aa)). The I/LWEQ domain occupies 2293-2533 (TEWVDPEDPT…QIRQQQYKFL (241 aa)). The interval 2300-2482 (DPTVIAENEL…AAQKAAAFEE (183 aa)) is helical bundle R13.

In terms of assembly, part of a complex composed of THSD1, PTK2/FAK1, TLN1 and VCL. Interacts with THSD1; this promotes interaction with PTK2/FAK1 and VCL. Binds with high affinity to VCL and with low affinity to integrins. Interacts with APBB1IP; this inhibits VCL binding. Interacts with PTK2/FAK1. Interacts with PIP5K1C and NRAP. Interacts with LAYN. Interacts with SYNM. Interacts with ITGB1; the interaction is prevented by competitive binding of ITGB1BP1. Interacts with SVEP1. Interacts (via R7 domain) with KANK1 or KANK2 (via KN motif); this interaction likely initiates the assembly of cortical microtubule stabilization complexes (CMSCs) at the vicinity of focal adhesions. As to quaternary structure, interacts with VCL; shows reduced VCL binding compared to isoform 2. Interacts with APBB1IP; shows similar level of binding compared to isoform 2. Interacts with VCL; shows enhanced VCL binding compared to isoform 1. Interacts with APBB1IP; shows similar level of binding compared to isoform 1. In terms of assembly, (Microbial infection) Interacts with human cytomegalovirus protein UL135. Expressed at low to non-detectable levels in many tissues but highly expressed in skin and pancreas with other tissues including kidney cortex, endocervix, testis, pituitary, liver, and spleen also showing robust expression.

It localises to the cell projection. The protein resides in the ruffle membrane. Its subcellular location is the cytoplasm. It is found in the cytoskeleton. The protein localises to the cell surface. It localises to the cell junction. The protein resides in the focal adhesion. In terms of biological role, high molecular weight cytoskeletal protein concentrated at regions of cell-matrix and cell-cell contacts. Involved in connections of major cytoskeletal structures to the plasma membrane. With KANK1 co-organize the assembly of cortical microtubule stabilizing complexes (CMSCs) positioned to control microtubule-actin crosstalk at focal adhesions (FAs) rims. This Homo sapiens (Human) protein is Talin-1 (TLN1).